A 154-amino-acid polypeptide reads, in one-letter code: Myoglobin (154 aa).

One can recognise a Globin domain in the interval glycine 2–lysine 148. At serine 4 the chain carries Phosphoserine. Nitrite is bound at residue histidine 65. Residue histidine 65 participates in O2 binding. Threonine 68 carries the phosphothreonine modification. Position 94 (histidine 94) interacts with heme b.

This sequence belongs to the globin family. In terms of assembly, monomeric.

The protein resides in the cytoplasm. It is found in the sarcoplasm. It carries out the reaction Fe(III)-heme b-[protein] + nitric oxide + H2O = Fe(II)-heme b-[protein] + nitrite + 2 H(+). It catalyses the reaction H2O2 + AH2 = A + 2 H2O. In terms of biological role, monomeric heme protein which primary function is to store oxygen and facilitate its diffusion within muscle tissues. Reversibly binds oxygen through a pentacoordinated heme iron and enables its timely and efficient release as needed during periods of heightened demand. Depending on the oxidative conditions of tissues and cells, and in addition to its ability to bind oxygen, it also has a nitrite reductase activity whereby it regulates the production of bioactive nitric oxide. Under stress conditions, like hypoxia and anoxia, it also protects cells against reactive oxygen species thanks to its pseudoperoxidase activity. This chain is Myoglobin (MB), found in Tupaia glis (Common tree shrew).